We begin with the raw amino-acid sequence, 232 residues long: Demethylmenaquinone methyltransferase (232 aa).

Residues Thr-58, Asp-79, and 104–105 (NA) contribute to the S-adenosyl-L-methionine site.

This sequence belongs to the class I-like SAM-binding methyltransferase superfamily. MenG/UbiE family.

It carries out the reaction a 2-demethylmenaquinol + S-adenosyl-L-methionine = a menaquinol + S-adenosyl-L-homocysteine + H(+). It functions in the pathway quinol/quinone metabolism; menaquinone biosynthesis; menaquinol from 1,4-dihydroxy-2-naphthoate: step 2/2. In terms of biological role, methyltransferase required for the conversion of demethylmenaquinol (DMKH2) to menaquinol (MKH2). This is Demethylmenaquinone methyltransferase from Bacillus licheniformis (strain ATCC 14580 / DSM 13 / JCM 2505 / CCUG 7422 / NBRC 12200 / NCIMB 9375 / NCTC 10341 / NRRL NRS-1264 / Gibson 46).